The following is a 770-amino-acid chain: Probable methyltransferase PMT25 (770 aa).

The Cytoplasmic segment spans residues 1 to 17 (MAMGKYSRVDGKKSSSY). Residues 18-38 (GLTITIVLLLSLCLVGTWMFM) form a helical; Signal-anchor for type II membrane protein membrane-spanning segment. The Lumenal segment spans residues 39 to 770 (SSWSAPADSA…ETETIKSAIA (732 aa)). Residues 44 to 238 (PADSAGYSST…SSISKDQSSY (195 aa)) form a disordered region. Residues 55-79 (TAKDVSKNDLRKEEGDRDPKNFSDE) show a composition bias toward basic and acidic residues. N-linked (GlcNAc...) asparagine glycans are attached at residues Asn75 and Asn107. A compositionally biased stretch (polar residues) spans 92-109 (QVKTDSENSAEGNQVNES). Basic and acidic residues-rich tracts occupy residues 110-124 (SGEK…KESD) and 131-177 (DGEK…KAEE). Asn163 and Asn178 each carry an N-linked (GlcNAc...) asparagine glycan. Composition is skewed to polar residues over residues 205–220 (ESST…LVES) and 227–238 (QQSSISKDQSSY). N-linked (GlcNAc...) asparagine glycosylation is found at Asn244 and Asn363.

This sequence belongs to the methyltransferase superfamily.

It is found in the golgi apparatus membrane. The polypeptide is Probable methyltransferase PMT25 (Arabidopsis thaliana (Mouse-ear cress)).